The following is a 226-amino-acid chain: 26S proteasome non-ATPase regulatory subunit 10 (226 aa).

A required for nuclear localization region spans residues 1–37 (MEGCVSNLMVCNLAYSGKLEELKESILADKSLATRTD). The segment at 1–71 (MEGCVSNLMV…LGVPVNDKDD (71 aa)) is interaction with RB1. ANK repeat units lie at residues 3 to 36 (GCVS…ATRT), 37 to 69 (DQDS…VNDK), 70 to 102 (DDAG…VNAV), 103 to 135 (NQNG…PDAK), 136 to 168 (DHYE…TNIQ), 169 to 201 (DTEG…IYIE), and 202 to 226 (NKEE…MVEG). The interaction with RELA stretch occupies residues 39–226 (DSRTALHWAC…GLILKRMVEG (188 aa)). The interaction with RB1 stretch occupies residues 171–226 (EGNTPLHLACDEERVEEAKLLVSQGASIYIENKEEKTPLQVAKGGLGLILKRMVEG).

Part of transient complex containing PSMD10, PSMC4, PSMC5 and PAAF1 formed during the assembly of the 26S proteasome. Stays associated throughout the assembly of the PA700/19S RC and is released upon association with the 20S core. Interacts with PSMC4. Interacts with RB1. Interacts with CDK4. Interacts with MDM2. Interacts with RELA. Associates with a CDK4:CCND2 serine/threonine kinase complex. Interacts with ARHGDIA and increases the interaction between ARHGDIA and RHOA, hence promotes ARHGDIA inactivation of RHOA and ROCK. In terms of tissue distribution, tends to be up-regulated in cancer cells with RAS mutations, including lung cancers and adenocarconimas (at protein level).

It is found in the cytoplasm. The protein resides in the nucleus. Functionally, acts as a chaperone during the assembly of the 26S proteasome, specifically of the PA700/19S regulatory complex (RC). In the initial step of the base subcomplex assembly is part of an intermediate PSMD10:PSMC4:PSMC5:PAAF1 module which probably assembles with a PSMD5:PSMC2:PSMC1:PSMD2 module. Independently of the proteasome, regulates EGF-induced AKT activation through inhibition of the RHOA/ROCK/PTEN pathway, leading to prolonged AKT activation. Plays an important role in RAS-induced tumorigenesis. Its function is as follows. Acts as an proto-oncoprotein by being involved in negative regulation of tumor suppressors RB1 and p53/TP53. Overexpression is leading to phosphorylation of RB1 and proteasomal degradation of RB1. Regulates CDK4-mediated phosphorylation of RB1 by competing with CDKN2A for binding with CDK4. Facilitates binding of MDM2 to p53/TP53 and the mono- and polyubiquitination of p53/TP53 by MDM2 suggesting a function in targeting the TP53:MDM2 complex to the 26S proteasome. Involved in p53-independent apoptosis. Involved in regulation of NF-kappa-B by retaining it in the cytoplasm. Binds to the NF-kappa-B component RELA and accelerates its XPO1/CRM1-mediated nuclear export. The chain is 26S proteasome non-ATPase regulatory subunit 10 (PSMD10) from Homo sapiens (Human).